An 84-amino-acid chain; its full sequence is Small ribosomal subunit protein bS18 (84 aa).

It belongs to the bacterial ribosomal protein bS18 family. Part of the 30S ribosomal subunit. Forms a tight heterodimer with protein bS6.

Its function is as follows. Binds as a heterodimer with protein bS6 to the central domain of the 16S rRNA, where it helps stabilize the platform of the 30S subunit. This chain is Small ribosomal subunit protein bS18, found in Mycoplasma mobile (strain ATCC 43663 / 163K / NCTC 11711) (Mesomycoplasma mobile).